The chain runs to 429 residues: Enolase (429 aa).

Position 174 (glutamine 174) interacts with (2R)-2-phosphoglycerate. The active-site Proton donor is glutamate 218. Mg(2+)-binding residues include aspartate 254, glutamate 295, and aspartate 321. (2R)-2-phosphoglycerate-binding residues include lysine 346, arginine 375, serine 376, and lysine 397. Lysine 346 serves as the catalytic Proton acceptor.

This sequence belongs to the enolase family. Mg(2+) serves as cofactor.

It localises to the cytoplasm. Its subcellular location is the secreted. It is found in the cell surface. The enzyme catalyses (2R)-2-phosphoglycerate = phosphoenolpyruvate + H2O. Its pathway is carbohydrate degradation; glycolysis; pyruvate from D-glyceraldehyde 3-phosphate: step 4/5. In terms of biological role, catalyzes the reversible conversion of 2-phosphoglycerate (2-PG) into phosphoenolpyruvate (PEP). It is essential for the degradation of carbohydrates via glycolysis. This is Enolase from Methanosarcina acetivorans (strain ATCC 35395 / DSM 2834 / JCM 12185 / C2A).